A 435-amino-acid polypeptide reads, in one-letter code: MINKTLHTKHTLLGLLAMAVLMIPVWSQAKVQMLDRIVAVVNDGAIMASELDERINTIALQFQEKGQQLPSPAILREQVLDRMILERLQLQLAERAGIKVDEASLNEALAGIARQNDMSLEDFAATLREDGYSWTQFREQIRQDMVISRLQQRSVASRIQITDREVDRFLSSELGKQMFQEDFRLGHILIRVPSEARPQQISQARAKAKEIIERLEAGSDFQQLAIALSDGPNALEGGDLGWRPAAQWPTLFAENAINLKKGEFSQPLRSGAGFHILKMIDRKGGAEKVVTQYHVRHVLIKADALTSAEQAQQRAIRLHDEVAAGKRQFKETAAEFSDDPGSARNGGELGWVNKGEMVPEFEQVMLNTPVGELSPVFESQFGWHFLRVDDIRDADMSTEFRRMQATQALQKRRFEEELETWVQEKRSESYVDIRL.

The N-terminal stretch at 1–29 (MINKTLHTKHTLLGLLAMAVLMIPVWSQA) is a signal peptide. 2 PpiC domains span residues 180–281 (QEDF…KMID) and 290–390 (VTQY…RVDD).

The protein localises to the periplasm. The enzyme catalyses [protein]-peptidylproline (omega=180) = [protein]-peptidylproline (omega=0). Chaperone involved in the correct folding and assembly of outer membrane proteins. Recognizes specific patterns of aromatic residues and the orientation of their side chains, which are found more frequently in integral outer membrane proteins. May act in both early periplasmic and late outer membrane-associated steps of protein maturation. This chain is Chaperone SurA, found in Alcanivorax borkumensis (strain ATCC 700651 / DSM 11573 / NCIMB 13689 / SK2).